Here is a 327-residue protein sequence, read N- to C-terminus: Phenylalanine--tRNA ligase alpha subunit (327 aa).

Residue glutamate 252 participates in Mg(2+) binding.

Belongs to the class-II aminoacyl-tRNA synthetase family. Phe-tRNA synthetase alpha subunit type 1 subfamily. As to quaternary structure, tetramer of two alpha and two beta subunits. Mg(2+) is required as a cofactor.

Its subcellular location is the cytoplasm. The enzyme catalyses tRNA(Phe) + L-phenylalanine + ATP = L-phenylalanyl-tRNA(Phe) + AMP + diphosphate + H(+). The polypeptide is Phenylalanine--tRNA ligase alpha subunit (Shewanella baltica (strain OS223)).